A 442-amino-acid polypeptide reads, in one-letter code: Probable serine/threonine-protein kinase PBL17 (442 aa).

Gly-2 is lipidated: N-myristoyl glycine. The S-palmitoyl cysteine moiety is linked to residue Cys-4. Thr-79 is subject to Phosphothreonine. The 281-residue stretch at 90-370 (FRPDYILGEG…NHVVEVLETL (281 aa)) folds into the Protein kinase domain. ATP is bound by residues 96–104 (LGEGGFGVV) and Lys-125. The residue at position 170 (Tyr-170) is a Phosphotyrosine. The active-site Proton acceptor is Asp-220. Residue Ser-254 is modified to Phosphoserine. A phosphothreonine mark is found at Thr-255 and Thr-260. The residue at position 268 (Tyr-268) is a Phosphotyrosine. The disordered stretch occupies residues 385-442 (HSRGKSVTLYEASSDSQGTRDGNGQRRRRPESGRSKSEAAVDTEKYVSTLSEPDTTKI). The span at 395–406 (EASSDSQGTRDG) shows a compositional bias: polar residues. Residues 414–429 (PESGRSKSEAAVDTEK) are compositionally biased toward basic and acidic residues. Polar residues predominate over residues 430-442 (YVSTLSEPDTTKI).

This sequence belongs to the protein kinase superfamily. Ser/Thr protein kinase family.

The protein localises to the cell membrane. It catalyses the reaction L-seryl-[protein] + ATP = O-phospho-L-seryl-[protein] + ADP + H(+). The enzyme catalyses L-threonyl-[protein] + ATP = O-phospho-L-threonyl-[protein] + ADP + H(+). May be involved in plant defense signaling. The sequence is that of Probable serine/threonine-protein kinase PBL17 from Arabidopsis thaliana (Mouse-ear cress).